The primary structure comprises 124 residues: Putative melanoma-associated antigen 5P (124 aa).

Residues 1-14 show a composition bias toward basic and acidic residues; sequence MSLEQKSQHCKPEE. Disordered stretches follow at residues 1-69 and 82-103; these read MSLE…QGAS and QSIK…DPES. The MAGE domain occupies 3–124; it reads LEQKSQHCKP…DLIHFLLLKY (122 aa). Composition is skewed to polar residues over residues 30–44 and 82–100; these read AATT…SSSP and QSIK…TSPD.

In terms of tissue distribution, expressed in many tumors of several types, such as melanoma, head and neck squamous cell carcinoma, lung carcinoma and breast carcinoma, but not in normal tissues except for testes.

Its function is as follows. May negatively regulates apoptosis. This Homo sapiens (Human) protein is Putative melanoma-associated antigen 5P.